Consider the following 366-residue polypeptide: Neutral protease 2 homolog MGYG_04094 (366 aa).

An N-terminal signal peptide occupies residues 1–19 (MQILAALSAIGALVATATA). Residues 20 to 188 (AAVPNAPAKQ…NKSRSTIDKR (169 aa)) constitute a propeptide that is removed on maturation. 2 disulfide bridges follow: cysteine 196–cysteine 267 and cysteine 274–cysteine 292. Histidine 317 is a Zn(2+) binding site. The active site involves glutamate 318. Residues histidine 321 and aspartate 332 each coordinate Zn(2+).

This sequence belongs to the peptidase M35 family. Requires Zn(2+) as cofactor.

The protein resides in the secreted. The enzyme catalyses Preferential cleavage of bonds with hydrophobic residues in P1'. Also 3-Asn-|-Gln-4 and 8-Gly-|-Ser-9 bonds in insulin B chain.. Secreted metalloproteinase that allows assimilation of proteinaceous substrates. Shows high activities on basic nuclear substrates such as histone and protamine. May be involved in virulence. The chain is Neutral protease 2 homolog MGYG_04094 from Arthroderma gypseum (strain ATCC MYA-4604 / CBS 118893) (Microsporum gypseum).